Reading from the N-terminus, the 232-residue chain is MLEGIIDINHIFDEEGIKTLKRFGWDGSVAVQNHNEYSEEIINSTVEYGEKHDFKVFSGVKISTKNQNEMEKAIKKYRNKVDILLVEGGDIKINRRVLEMNDVDILSTPELNRMDNGLDHILARLGSTNRVAIELNFGNLLKSRNYDRSKILWAFQRNLKLAKKYDTPVVISSGASDIYGIKAPGDLRGFLNTITDPLYSKKIMETTSKIIDYRLYLKKDTVLTLGIEIVEE.

This sequence belongs to the eukaryotic/archaeal RNase P protein component 3 family. As to quaternary structure, consists of a catalytic RNA component and at least 4-5 protein subunits.

It is found in the cytoplasm. It carries out the reaction Endonucleolytic cleavage of RNA, removing 5'-extranucleotides from tRNA precursor.. In terms of biological role, part of ribonuclease P, a protein complex that generates mature tRNA molecules by cleaving their 5'-ends. This is Ribonuclease P protein component 3 from Methanococcus maripaludis (strain C6 / ATCC BAA-1332).